The sequence spans 152 residues: Deoxyuridine 5'-triphosphate nucleotidohydrolase (152 aa).

Substrate is bound by residues 71–73, Asn-84, 88–90, and Met-98; these read RSG and LID.

This sequence belongs to the dUTPase family. Mg(2+) is required as a cofactor.

The enzyme catalyses dUTP + H2O = dUMP + diphosphate + H(+). The protein operates within pyrimidine metabolism; dUMP biosynthesis; dUMP from dCTP (dUTP route): step 2/2. Its function is as follows. This enzyme is involved in nucleotide metabolism: it produces dUMP, the immediate precursor of thymidine nucleotides and it decreases the intracellular concentration of dUTP so that uracil cannot be incorporated into DNA. In Haemophilus ducreyi (strain 35000HP / ATCC 700724), this protein is Deoxyuridine 5'-triphosphate nucleotidohydrolase.